The chain runs to 58 residues: Bestoxin (58 aa).

In terms of domain architecture, LCN-type CS-alpha/beta spans 3 to 58; that stretch reads VPGNYPLDKDGNTYTCLELGENKDCQKVCKLHGVQYGYCYAFSCWCKEYLDDKDSV. 3 disulfide bridges follow: Cys-18–Cys-41, Cys-27–Cys-46, and Cys-31–Cys-48.

In terms of tissue distribution, expressed by the venom gland.

The protein resides in the secreted. Its function is as follows. Beta toxins bind voltage-independently at site-4 of sodium channels (Nav) and shift the voltage of activation toward more negative potentials thereby affecting sodium channel activation and promoting spontaneous and repetitive firing. In mice, causes intense writhing. The sequence is that of Bestoxin from Parabuthus transvaalicus (Transvaal thick-tailed scorpion).